Reading from the N-terminus, the 108-residue chain is Small ribosomal subunit protein uS10 (108 aa).

This sequence belongs to the universal ribosomal protein uS10 family. Part of the 30S ribosomal subunit.

Involved in the binding of tRNA to the ribosomes. This Ehrlichia canis (strain Jake) protein is Small ribosomal subunit protein uS10.